The chain runs to 111 residues: Small ribosomal subunit protein bS6 (111 aa).

This sequence belongs to the bacterial ribosomal protein bS6 family.

Binds together with bS18 to 16S ribosomal RNA. The protein is Small ribosomal subunit protein bS6 of Francisella tularensis subsp. tularensis (strain FSC 198).